A 416-amino-acid chain; its full sequence is Thyroid hormone receptor alpha (416 aa).

Positions 1–30 are disordered; it reads MEPISNVEDPNSSEGDEKRWPDGPKRKRKN. The interval 1 to 58 is modulating; it reads MEPISNVEDPNSSEGDEKRWPDGPKRKRKNSTCSVKSMSALSLSVQGYIPSYLEKDEP. Over residues 15 to 24 the composition is skewed to basic and acidic residues; sequence GDEKRWPDGP. The Zn(2+) site is built by C59, C62, C76, C79, C97, C103, C113, and C116. 2 NR C4-type zinc fingers span residues 59 to 79 and 97 to 121; these read CVVC…CEGC and CKYD…FRKC. A DNA-binding region (nuclear receptor) is located at residues 59–133; the sequence is CVVCGDKATG…VCMAMDLVLD (75 aa). The NR LBD domain maps to 169-413; it reads SEWELIRHVT…PPLFLEVFED (245 aa). 2 residues coordinate 3,3',5-triiodo-L-thyronine: R234 and S283.

This sequence belongs to the nuclear hormone receptor family. NR1 subfamily.

It is found in the nucleus. Nuclear hormone receptor that can act as a repressor or activator of transcription. High affinity receptor for thyroid hormones, including triiodothyronine and thyroxine. The polypeptide is Thyroid hormone receptor alpha (thra1) (Salmo salar (Atlantic salmon)).